Reading from the N-terminus, the 119-residue chain is Large ribosomal subunit protein bL20 (119 aa).

It belongs to the bacterial ribosomal protein bL20 family.

Its function is as follows. Binds directly to 23S ribosomal RNA and is necessary for the in vitro assembly process of the 50S ribosomal subunit. It is not involved in the protein synthesizing functions of that subunit. The protein is Large ribosomal subunit protein bL20 of Buchnera aphidicola subsp. Cinara cedri (strain Cc).